The following is a 174-amino-acid chain: Small ribosomal subunit protein uS5 (174 aa).

The 64-residue stretch at 19 to 82 (LREKMIAINR…EEARRNMTKI (64 aa)) folds into the S5 DRBM domain.

The protein belongs to the universal ribosomal protein uS5 family. In terms of assembly, part of the 30S ribosomal subunit. Contacts proteins S4 and S8.

Its function is as follows. With S4 and S12 plays an important role in translational accuracy. Located at the back of the 30S subunit body where it stabilizes the conformation of the head with respect to the body. The protein is Small ribosomal subunit protein uS5 of Albidiferax ferrireducens (strain ATCC BAA-621 / DSM 15236 / T118) (Rhodoferax ferrireducens).